The sequence spans 530 residues: Autoinducer-2 kinase (530 aa).

This sequence belongs to the FGGY kinase family.

Its subcellular location is the cytoplasm. The enzyme catalyses (S)-4,5-dihydroxypentane-2,3-dione + ATP = (2S)-2-hydroxy-3,4-dioxopentyl phosphate + ADP + H(+). Functionally, catalyzes the phosphorylation of autoinducer-2 (AI-2) to phospho-AI-2, which subsequently inactivates the transcriptional regulator LsrR and leads to the transcription of the lsr operon. Phosphorylates the ring-open form of (S)-4,5-dihydroxypentane-2,3-dione (DPD), which is the precursor to all AI-2 signaling molecules, at the C5 position. The chain is Autoinducer-2 kinase from Escherichia coli (strain SMS-3-5 / SECEC).